Here is a 217-residue protein sequence, read N- to C-terminus: Imidazole glycerol phosphate synthase subunit HisH (217 aa).

In terms of domain architecture, Glutamine amidotransferase type-1 spans 6–214 (QIAVVDYDMG…VTQVAAAQLQ (209 aa)). Cys-84 functions as the Nucleophile in the catalytic mechanism. Active-site residues include His-189 and Glu-191.

In terms of assembly, heterodimer of HisH and HisF.

Its subcellular location is the cytoplasm. It carries out the reaction 5-[(5-phospho-1-deoxy-D-ribulos-1-ylimino)methylamino]-1-(5-phospho-beta-D-ribosyl)imidazole-4-carboxamide + L-glutamine = D-erythro-1-(imidazol-4-yl)glycerol 3-phosphate + 5-amino-1-(5-phospho-beta-D-ribosyl)imidazole-4-carboxamide + L-glutamate + H(+). The catalysed reaction is L-glutamine + H2O = L-glutamate + NH4(+). The protein operates within amino-acid biosynthesis; L-histidine biosynthesis; L-histidine from 5-phospho-alpha-D-ribose 1-diphosphate: step 5/9. In terms of biological role, IGPS catalyzes the conversion of PRFAR and glutamine to IGP, AICAR and glutamate. The HisH subunit catalyzes the hydrolysis of glutamine to glutamate and ammonia as part of the synthesis of IGP and AICAR. The resulting ammonia molecule is channeled to the active site of HisF. This is Imidazole glycerol phosphate synthase subunit HisH from Synechococcus sp. (strain ATCC 27144 / PCC 6301 / SAUG 1402/1) (Anacystis nidulans).